Consider the following 244-residue polypeptide: MGKLLFLFITLILFEQQSLAALPTGDSEKYLRARESMVQNQLSTRDIKDKRVLTAMREVPRHLFVPDLLVFKAYTDSPLPIGEGQTISQPYIVALMTELLELTGSERVLEIGTGSGYQAAVLSQVAKEVFTIEIKEKLCTKAGKLLDSLGYTNIQARCGDGYFGWNKEAPFDAIMITAAVDHVPPPLLAQLKDGGRLVLPLGNPFSYQNLVLVTRKGDDYRVWQISGVLFVPMTGHALKDSGEK.

Ser88 is an active-site residue.

The protein belongs to the methyltransferase superfamily. L-isoaspartyl/D-aspartyl protein methyltransferase family.

It localises to the cytoplasm. The catalysed reaction is [protein]-L-isoaspartate + S-adenosyl-L-methionine = [protein]-L-isoaspartate alpha-methyl ester + S-adenosyl-L-homocysteine. Its function is as follows. Catalyzes the methyl esterification of L-isoaspartyl residues in peptides and proteins that result from spontaneous decomposition of normal L-aspartyl and L-asparaginyl residues. It plays a role in the repair and/or degradation of damaged proteins. In Shewanella sediminis (strain HAW-EB3), this protein is Protein-L-isoaspartate O-methyltransferase 2.